The primary structure comprises 472 residues: TBC domain-containing protein C23D3.03c (472 aa).

A Rab-GAP TBC domain is found at 215-418 (GIPSRVRGRV…RILDCYVFEE (204 aa)).

The chain is TBC domain-containing protein C23D3.03c from Schizosaccharomyces pombe (strain 972 / ATCC 24843) (Fission yeast).